The primary structure comprises 446 residues: tRNA-2-methylthio-N(6)-dimethylallyladenosine synthase (446 aa).

Residues 3–124 enclose the MTTase N-terminal domain; sequence KKLYIKTYGC…LPELISKVVR (122 aa). Residues Cys-12, Cys-48, Cys-87, Cys-162, Cys-166, and Cys-169 each contribute to the [4Fe-4S] cluster site. In terms of domain architecture, Radical SAM core spans 148-380; sequence YPQGASSFIS…QKELAAQQLA (233 aa). The 64-residue stretch at 383–446 folds into the TRAM domain; it reads ESCIGSTMKV…LNSLSGEIYR (64 aa).

Belongs to the methylthiotransferase family. MiaB subfamily. In terms of assembly, monomer. It depends on [4Fe-4S] cluster as a cofactor.

The protein localises to the cytoplasm. The enzyme catalyses N(6)-dimethylallyladenosine(37) in tRNA + (sulfur carrier)-SH + AH2 + 2 S-adenosyl-L-methionine = 2-methylsulfanyl-N(6)-dimethylallyladenosine(37) in tRNA + (sulfur carrier)-H + 5'-deoxyadenosine + L-methionine + A + S-adenosyl-L-homocysteine + 2 H(+). Its function is as follows. Catalyzes the methylthiolation of N6-(dimethylallyl)adenosine (i(6)A), leading to the formation of 2-methylthio-N6-(dimethylallyl)adenosine (ms(2)i(6)A) at position 37 in tRNAs that read codons beginning with uridine. This chain is tRNA-2-methylthio-N(6)-dimethylallyladenosine synthase, found in Rickettsia bellii (strain RML369-C).